The primary structure comprises 503 residues: Aspartyl/glutamyl-tRNA(Asn/Gln) amidotransferase subunit B (503 aa).

Belongs to the GatB/GatE family. GatB subfamily. Heterotrimer of A, B and C subunits.

The enzyme catalyses L-glutamyl-tRNA(Gln) + L-glutamine + ATP + H2O = L-glutaminyl-tRNA(Gln) + L-glutamate + ADP + phosphate + H(+). It catalyses the reaction L-aspartyl-tRNA(Asn) + L-glutamine + ATP + H2O = L-asparaginyl-tRNA(Asn) + L-glutamate + ADP + phosphate + 2 H(+). In terms of biological role, allows the formation of correctly charged Asn-tRNA(Asn) or Gln-tRNA(Gln) through the transamidation of misacylated Asp-tRNA(Asn) or Glu-tRNA(Gln) in organisms which lack either or both of asparaginyl-tRNA or glutaminyl-tRNA synthetases. The reaction takes place in the presence of glutamine and ATP through an activated phospho-Asp-tRNA(Asn) or phospho-Glu-tRNA(Gln). The sequence is that of Aspartyl/glutamyl-tRNA(Asn/Gln) amidotransferase subunit B from Nocardia farcinica (strain IFM 10152).